Reading from the N-terminus, the 299-residue chain is ATP phosphoribosyltransferase (299 aa).

Belongs to the ATP phosphoribosyltransferase family. Long subfamily. Equilibrium between an active dimeric form, an inactive hexameric form and higher aggregates. Interconversion between the various forms is largely reversible and is influenced by the natural substrates and inhibitors of the enzyme. Mg(2+) is required as a cofactor.

The protein localises to the cytoplasm. It carries out the reaction 1-(5-phospho-beta-D-ribosyl)-ATP + diphosphate = 5-phospho-alpha-D-ribose 1-diphosphate + ATP. It functions in the pathway amino-acid biosynthesis; L-histidine biosynthesis; L-histidine from 5-phospho-alpha-D-ribose 1-diphosphate: step 1/9. With respect to regulation, feedback inhibited by histidine. Its function is as follows. Catalyzes the condensation of ATP and 5-phosphoribose 1-diphosphate to form N'-(5'-phosphoribosyl)-ATP (PR-ATP). Has a crucial role in the pathway because the rate of histidine biosynthesis seems to be controlled primarily by regulation of HisG enzymatic activity. The sequence is that of ATP phosphoribosyltransferase from Buchnera aphidicola subsp. Baizongia pistaciae (strain Bp).